The primary structure comprises 264 residues: S-adenosylmethionine decarboxylase proenzyme (264 aa).

The active-site Schiff-base intermediate with substrate; via pyruvic acid is the serine 113. A Pyruvic acid (Ser); by autocatalysis modification is found at serine 113. Residue histidine 118 is the Proton acceptor; for processing activity of the active site. Cysteine 141 (proton donor; for catalytic activity) is an active-site residue.

It belongs to the prokaryotic AdoMetDC family. Type 2 subfamily. Heterooctamer of four alpha and four beta chains arranged as a tetramer of alpha/beta heterodimers. Pyruvate serves as cofactor. Post-translationally, is synthesized initially as an inactive proenzyme. Formation of the active enzyme involves a self-maturation process in which the active site pyruvoyl group is generated from an internal serine residue via an autocatalytic post-translational modification. Two non-identical subunits are generated from the proenzyme in this reaction, and the pyruvate is formed at the N-terminus of the alpha chain, which is derived from the carboxyl end of the proenzyme. The post-translation cleavage follows an unusual pathway, termed non-hydrolytic serinolysis, in which the side chain hydroxyl group of the serine supplies its oxygen atom to form the C-terminus of the beta chain, while the remainder of the serine residue undergoes an oxidative deamination to produce ammonia and the pyruvoyl group blocking the N-terminus of the alpha chain.

It catalyses the reaction S-adenosyl-L-methionine + H(+) = S-adenosyl 3-(methylsulfanyl)propylamine + CO2. It participates in amine and polyamine biosynthesis; S-adenosylmethioninamine biosynthesis; S-adenosylmethioninamine from S-adenosyl-L-methionine: step 1/1. Functionally, catalyzes the decarboxylation of S-adenosylmethionine to S-adenosylmethioninamine (dcAdoMet), the propylamine donor required for the synthesis of the polyamines spermine and spermidine from the diamine putrescine. This is S-adenosylmethionine decarboxylase proenzyme from Xanthomonas campestris pv. campestris (strain B100).